The following is a 90-amino-acid chain: Mitochondrial import inner membrane translocase subunit tim9 (90 aa).

The short motif at 35–59 is the Twin CX3C motif element; the sequence is CFDNCVNDFTTKSLISREEGCIMRC. 2 cysteine pairs are disulfide-bonded: Cys-35–Cys-59 and Cys-39–Cys-55.

The protein belongs to the small Tim family. As to quaternary structure, heterohexamer; composed of 3 copies of TIM9 and 3 copies of TIM10, named soluble 70 kDa complex. Associates with the TIM22 complex, whose core is composed of TIM22 and TIM54. Interacts with the transmembrane regions of multi-pass transmembrane proteins in transit.

The protein localises to the mitochondrion inner membrane. Functionally, mitochondrial intermembrane chaperone that participates in the import and insertion of multi-pass transmembrane proteins into the mitochondrial inner membrane. Also required for the transfer of beta-barrel precursors from the TOM complex to the sorting and assembly machinery (SAM complex) of the outer membrane. Acts as a chaperone-like protein that protects the hydrophobic precursors from aggregation and guide them through the mitochondrial intermembrane space. The sequence is that of Mitochondrial import inner membrane translocase subunit tim9 (tim9) from Aspergillus fumigatus (strain ATCC MYA-4609 / CBS 101355 / FGSC A1100 / Af293) (Neosartorya fumigata).